A 410-amino-acid chain; its full sequence is Multifunctional CCA protein (410 aa).

The ATP site is built by Gly-8 and Arg-11. Residues Gly-8 and Arg-11 each contribute to the CTP site. Residues Glu-21 and Asp-23 each coordinate Mg(2+). The ATP site is built by Arg-91, Arg-137, and Arg-140. Residues Arg-91, Arg-137, and Arg-140 each coordinate CTP. An HD domain is found at 228 to 329 (TGIHVMMALR…LKLFDRLDVW (102 aa)).

It belongs to the tRNA nucleotidyltransferase/poly(A) polymerase family. Bacterial CCA-adding enzyme type 1 subfamily. Monomer. Can also form homodimers and oligomers. The cofactor is Mg(2+). Ni(2+) is required as a cofactor.

The catalysed reaction is a tRNA precursor + 2 CTP + ATP = a tRNA with a 3' CCA end + 3 diphosphate. It carries out the reaction a tRNA with a 3' CCA end + 2 CTP + ATP = a tRNA with a 3' CCACCA end + 3 diphosphate. Catalyzes the addition and repair of the essential 3'-terminal CCA sequence in tRNAs without using a nucleic acid template. Adds these three nucleotides in the order of C, C, and A to the tRNA nucleotide-73, using CTP and ATP as substrates and producing inorganic pyrophosphate. tRNA 3'-terminal CCA addition is required both for tRNA processing and repair. Also involved in tRNA surveillance by mediating tandem CCA addition to generate a CCACCA at the 3' terminus of unstable tRNAs. While stable tRNAs receive only 3'-terminal CCA, unstable tRNAs are marked with CCACCA and rapidly degraded. The polypeptide is Multifunctional CCA protein (Tolumonas auensis (strain DSM 9187 / NBRC 110442 / TA 4)).